Here is a 262-residue protein sequence, read N- to C-terminus: Acyl-[acyl-carrier-protein]--UDP-N-acetylglucosamine O-acyltransferase (262 aa).

The protein belongs to the transferase hexapeptide repeat family. LpxA subfamily. Homotrimer.

Its subcellular location is the cytoplasm. The enzyme catalyses a (3R)-hydroxyacyl-[ACP] + UDP-N-acetyl-alpha-D-glucosamine = a UDP-3-O-[(3R)-3-hydroxyacyl]-N-acetyl-alpha-D-glucosamine + holo-[ACP]. The protein operates within glycolipid biosynthesis; lipid IV(A) biosynthesis; lipid IV(A) from (3R)-3-hydroxytetradecanoyl-[acyl-carrier-protein] and UDP-N-acetyl-alpha-D-glucosamine: step 1/6. Involved in the biosynthesis of lipid A, a phosphorylated glycolipid that anchors the lipopolysaccharide to the outer membrane of the cell. This chain is Acyl-[acyl-carrier-protein]--UDP-N-acetylglucosamine O-acyltransferase, found in Psychromonas ingrahamii (strain DSM 17664 / CCUG 51855 / 37).